The primary structure comprises 314 residues: tRNA pseudouridine synthase B (314 aa).

The Nucleophile role is filled by Asp54.

It belongs to the pseudouridine synthase TruB family. Type 1 subfamily.

The enzyme catalyses uridine(55) in tRNA = pseudouridine(55) in tRNA. Functionally, responsible for synthesis of pseudouridine from uracil-55 in the psi GC loop of transfer RNAs. The sequence is that of tRNA pseudouridine synthase B from Cupriavidus metallidurans (strain ATCC 43123 / DSM 2839 / NBRC 102507 / CH34) (Ralstonia metallidurans).